The sequence spans 566 residues: Multidrug and toxin extrusion protein 1 (566 aa).

At Met-1 the chain carries N-acetylmethionine. 13 helical membrane-spanning segments follow: residues 37 to 57, 72 to 92, 120 to 140, 152 to 172, 176 to 196, 216 to 236, 257 to 276, 295 to 315, 336 to 356, 370 to 390, 409 to 429, 437 to 457, and 543 to 563; these read LLVL…ISFI, AVTL…HGLS, LILL…EQIL, LTQT…LYTL, YLLN…ANLV, ALAN…YILW, SFLQ…WWAY, SITY…SVAA, AISL…LLGC, IVAL…FEAL, IVNA…LMFV, LWSG…VFIA, and GLLF…RVYI.

It belongs to the multi antimicrobial extrusion (MATE) (TC 2.A.66.1) family. In terms of tissue distribution, highly expressed in kidney and placenta, moderately in stomach, colon, lung, spleen, skeletal muscle and prostate, and slightly in spleen. In the kidney, found in medulla and cortex, especially in the proximal convoluted and straight tubules. No expression was observed in heart, brain, small intestine and liver. Expressed in Sertoli cells in testis.

The protein localises to the cell membrane. The protein resides in the apical cell membrane. The enzyme catalyses thiamine(out) + H(+)(in) = thiamine(in) + H(+)(out). It catalyses the reaction estrone 3-sulfate(in) + H(+)(out) = estrone 3-sulfate(out) + H(+)(in). The catalysed reaction is creatinine(in) + H(+)(out) = creatinine(out) + H(+)(in). It carries out the reaction agmatine(in) + H(+)(out) = agmatine(out) + H(+)(in). Functionally, multidrug efflux pump that functions as a H(+)/organic cation antiporter. Plays a physiological role in the excretion of cationic compounds including endogenous metabolites, drugs, toxins through the kidney and liver, into urine and bile respectively. Mediates the efflux of endogenous compounds such as creatinine, vitamin B1/thiamine, agmatine and estrone-3-sulfate. May also contribute to regulate the transport of cationic compounds in testis across the blood-testis-barrier. In Rattus norvegicus (Rat), this protein is Multidrug and toxin extrusion protein 1 (Slc47a1).